We begin with the raw amino-acid sequence, 557 residues long: MFS-type transporter clz4 (557 aa).

A run of 14 helical transmembrane segments spans residues Leu22–Gly42, Ser59–Gly79, Ala89–Thr109, Leu120–Val140, Ala150–Val170, Gly179–Leu199, Trp217–Pro237, Ser245–Ile265, Leu269–Leu289, Val319–Ala339, Ser346–Leu366, Val379–Ile399, Phe419–Thr439, and His479–Lys499. Basic and acidic residues predominate over residues Ser505–Glu523. Residues Ser505–Gly557 form a disordered region.

Belongs to the major facilitator superfamily. TCR/Tet family.

It is found in the membrane. Functionally, MFS-type transporter; part of the gene cluster that mediates the biosynthesis of squalestatin S1 (SQS1, also known as zaragozic acid A), a heavily oxidized fungal polyketide that offers potent cholesterol lowering activity by targeting squalene synthase (SS). The chain is MFS-type transporter clz4 from Cochliobolus lunatus (Filamentous fungus).